A 271-amino-acid chain; its full sequence is Tryptophan synthase alpha chain (271 aa).

Catalysis depends on proton acceptor residues Glu49 and Asp60.

The protein belongs to the TrpA family. In terms of assembly, tetramer of two alpha and two beta chains.

The catalysed reaction is (1S,2R)-1-C-(indol-3-yl)glycerol 3-phosphate + L-serine = D-glyceraldehyde 3-phosphate + L-tryptophan + H2O. The protein operates within amino-acid biosynthesis; L-tryptophan biosynthesis; L-tryptophan from chorismate: step 5/5. Its function is as follows. The alpha subunit is responsible for the aldol cleavage of indoleglycerol phosphate to indole and glyceraldehyde 3-phosphate. In Nitrosococcus oceani (strain ATCC 19707 / BCRC 17464 / JCM 30415 / NCIMB 11848 / C-107), this protein is Tryptophan synthase alpha chain.